A 93-amino-acid chain; its full sequence is Small ribosomal subunit protein uS19 (93 aa).

This sequence belongs to the universal ribosomal protein uS19 family.

Protein S19 forms a complex with S13 that binds strongly to the 16S ribosomal RNA. In Mycobacterium tuberculosis (strain ATCC 25177 / H37Ra), this protein is Small ribosomal subunit protein uS19.